A 185-amino-acid polypeptide reads, in one-letter code: Thiol:disulfide interchange protein DsbE (185 aa).

Residues methionine 1–asparagine 4 lie on the Cytoplasmic side of the membrane. The chain crosses the membrane as a helical span at residues valine 5–alanine 25. Over arginine 26–glutamine 185 the chain is Periplasmic. A Thioredoxin domain is found at alanine 39–aspartate 177. Cysteine 80 and cysteine 83 form a disulfide bridge.

This sequence belongs to the thioredoxin family. DsbE subfamily.

Its subcellular location is the cell inner membrane. In terms of biological role, involved in disulfide bond formation. Catalyzes a late, reductive step in the assembly of periplasmic c-type cytochromes, probably the reduction of disulfide bonds of the apocytochrome c to allow covalent linkage with the heme. Possible subunit of a heme lyase. The chain is Thiol:disulfide interchange protein DsbE (dsbE1) from Salmonella typhimurium (strain LT2 / SGSC1412 / ATCC 700720).